Reading from the N-terminus, the 150-residue chain is MNLWLLACLVAGFLGAWAPAVHTQGVFEDCCLAYHYPIGWAVLRRAWTYRIQEVSGSCNLPAAIFYLPKRHRKVCGNPKSREVQRAMKLLDARNKVFAKLHHNTQTFQAGPHAVKKLSSGNSKLSSSKFSNPISSSKRNVSLLISANSGL.

A signal peptide spans 1 to 23; the sequence is MNLWLLACLVAGFLGAWAPAVHT. 2 disulfide bridges follow: cysteine 30/cysteine 58 and cysteine 31/cysteine 75.

It belongs to the intercrine beta (chemokine CC) family. In terms of tissue distribution, specifically expressed by thymic dendritic cells. High levels in thymus and small intestine.

Its subcellular location is the secreted. Its function is as follows. Potentially involved in T-cell development. Recombinant protein shows chemotactic activity on thymocytes, macrophages, THP-1 cells, and dendritics cells but is inactive on peripheral blood lymphocytes and neutrophils. Binds to CCR9. Isoform 2 is an antagonist of isoform 1. Binds to atypical chemokine receptor ACKR4 and mediates the recruitment of beta-arrestin (ARRB1/2) to ACKR4. This chain is C-C motif chemokine 25 (CCL25), found in Homo sapiens (Human).